The primary structure comprises 157 residues: MSNLCPCNSQLPYSECCEPYLLGTKNAPTAQALMRSRYSAFVTHNADHLIKTWHPSCRTPSLRDELIATFPNTQWLGLHIISAQENPRDNEAFVEFSACFIEINADDKQYLHERSRFLKIDDCWFYIDGVQPKVGRNDPCPCGSGRKYKKCCEHNRK.

Belongs to the UPF0225 family.

This is UPF0225 protein PMI1492 from Proteus mirabilis (strain HI4320).